Reading from the N-terminus, the 139-residue chain is Ribonuclease VapC3 (139 aa).

The PINc domain occupies 14-121 (EAIVLDTGAF…VATDDYTLQR (108 aa)). A Mg(2+)-binding site is contributed by Asp-19.

This sequence belongs to the PINc/VapC protein family. Mg(2+) is required as a cofactor.

Its function is as follows. Toxic component of a type II toxin-antitoxin (TA) system. An RNase. The sequence is that of Ribonuclease VapC3 from Aeropyrum pernix (strain ATCC 700893 / DSM 11879 / JCM 9820 / NBRC 100138 / K1).